The primary structure comprises 121 residues: Small ribosomal subunit protein uS13 (121 aa).

Residues 95–121 (GLPVRGQKTKTNARTRKGKRKTVGAKS) form a disordered region.

The protein belongs to the universal ribosomal protein uS13 family. In terms of assembly, part of the 30S ribosomal subunit. Forms a loose heterodimer with protein S19. Forms two bridges to the 50S subunit in the 70S ribosome.

Functionally, located at the top of the head of the 30S subunit, it contacts several helices of the 16S rRNA. In the 70S ribosome it contacts the 23S rRNA (bridge B1a) and protein L5 of the 50S subunit (bridge B1b), connecting the 2 subunits; these bridges are implicated in subunit movement. Contacts the tRNAs in the A and P-sites. The chain is Small ribosomal subunit protein uS13 from Campylobacter jejuni subsp. jejuni serotype O:6 (strain 81116 / NCTC 11828).